Here is a 368-residue protein sequence, read N- to C-terminus: MRLDSISIANFRNHTLLEFEPGHSVTNIYGRNGSGKTSILEAIHYCALTRGFSGNNDREYLKFGEELFTIRSSFTSGQGIATKVSVAYSPKREKRILVNEQELQTFSSHIGTIPCVTFTPREMVIINGAPAERRRFIDTAICQYDRKYLSDLLLYRRILQQRNALLSSEQDPRFIDSALDVLTDQLVATATEIVLVRKRFIEHFTSMLGDVYQWIPEGAEPSILYQSSLGHHENLYEKDKIQQVFRERFETLKQQELQRRQTLAGPHRDDLQFYLNKREIRKYASQGQQRAFLVAMKMTLQGYLYEASGEIPITLLDDLFSELDEVVSGTMVETLATKGQVIITSTGKKEGKGISCFSVDDYKSSEEP.

30–37 (GRNGSGKT) serves as a coordination point for ATP.

This sequence belongs to the RecF family.

It localises to the cytoplasm. The RecF protein is involved in DNA metabolism; it is required for DNA replication and normal SOS inducibility. RecF binds preferentially to single-stranded, linear DNA. It also seems to bind ATP. The chain is DNA replication and repair protein RecF from Chlorobaculum parvum (strain DSM 263 / NCIMB 8327) (Chlorobium vibrioforme subsp. thiosulfatophilum).